The following is a 239-amino-acid chain: Ribonuclease PH (239 aa).

Phosphate is bound by residues Arg86 and 124 to 126 (GTR).

It belongs to the RNase PH family. In terms of assembly, homohexameric ring arranged as a trimer of dimers.

The catalysed reaction is tRNA(n+1) + phosphate = tRNA(n) + a ribonucleoside 5'-diphosphate. Phosphorolytic 3'-5' exoribonuclease that plays an important role in tRNA 3'-end maturation. Removes nucleotide residues following the 3'-CCA terminus of tRNAs; can also add nucleotides to the ends of RNA molecules by using nucleoside diphosphates as substrates, but this may not be physiologically important. Probably plays a role in initiation of 16S rRNA degradation (leading to ribosome degradation) during starvation. The sequence is that of Ribonuclease PH from Anaeromyxobacter dehalogenans (strain 2CP-1 / ATCC BAA-258).